Here is a 431-residue protein sequence, read N- to C-terminus: Glutamate-1-semialdehyde 2,1-aminomutase (431 aa).

At K269 the chain carries N6-(pyridoxal phosphate)lysine.

This sequence belongs to the class-III pyridoxal-phosphate-dependent aminotransferase family. HemL subfamily. Homodimer. Pyridoxal 5'-phosphate serves as cofactor.

It localises to the cytoplasm. The enzyme catalyses (S)-4-amino-5-oxopentanoate = 5-aminolevulinate. The protein operates within porphyrin-containing compound metabolism; protoporphyrin-IX biosynthesis; 5-aminolevulinate from L-glutamyl-tRNA(Glu): step 2/2. Its pathway is porphyrin-containing compound metabolism; chlorophyll biosynthesis. This Chlorobium phaeobacteroides (strain DSM 266 / SMG 266 / 2430) protein is Glutamate-1-semialdehyde 2,1-aminomutase.